A 203-amino-acid chain; its full sequence is Putative B3 domain-containing protein At1g50220 (203 aa).

A DNA-binding region (TF-B3) is located at residues 99-195 (DIVGNVALPK…KFIVLNFQHK (97 aa)).

The protein localises to the nucleus. The protein is Putative B3 domain-containing protein At1g50220 of Arabidopsis thaliana (Mouse-ear cress).